The primary structure comprises 354 residues: Peptide-N(4)-(N-acetyl-beta-D-glucosaminyl)asparagine amidase F (354 aa).

The signal sequence occupies residues 1 to 40 (MRKLLIFSISAYLMAGIVSCKGVDSATPVTEDRLALNAVN). An intrachain disulfide couples Cys-91 to Cys-96. Catalysis depends on residues Asp-100, Glu-158, and Glu-246. Intrachain disulfides connect Cys-244-Cys-248 and Cys-271-Cys-292.

As to quaternary structure, monomer.

The catalysed reaction is Hydrolysis of an N(4)-(acetyl-beta-D-glucosaminyl)asparagine residue in which the glucosamine residue may be further glycosylated, to yield a (substituted) N-acetyl-beta-D-glucosaminylamine and a peptide containing an aspartate residue.. Functionally, cleaves an entire glycan from a glycoprotein. Requires that the glycosylated asparagine moiety (reaction 1) be substituted on its amino (R1) and carboxyl (R2) terminus with a polypeptide chain. This is Peptide-N(4)-(N-acetyl-beta-D-glucosaminyl)asparagine amidase F (ngl) from Elizabethkingia miricola (Chryseobacterium miricola).